The primary structure comprises 1461 residues: DNA topoisomerase 2 (1461 aa).

The segment covering Met-1–Phe-17 has biased composition (acidic residues). The disordered stretch occupies residues Met-1–Thr-61. Residues Thr-41 to Thr-52 are compositionally biased toward low complexity. ATP is bound by residues Asn-120, Asn-149, Ser-177–Asn-179, and Gly-190–Lys-197. Residues Ser-382–Lys-389 are interaction with DNA. Gln-418–Lys-420 contributes to the ATP binding site. The 117-residue stretch at Cys-498–Leu-614 folds into the Toprim domain. 3 residues coordinate Mg(2+): Glu-504, Asp-583, and Asp-585. Positions Ile-752 to Leu-1226 constitute a Topo IIA-type catalytic domain. Tyr-842 (O-(5'-phospho-DNA)-tyrosine intermediate) is an active-site residue. The interaction with DNA stretch occupies residues Lys-1024–Asn-1033. 2 disordered regions span residues Asp-1122–Asn-1155 and Arg-1244–Glu-1461. The segment covering Leu-1133–Val-1153 has biased composition (acidic residues). The segment covering Gly-1251–Lys-1261 has biased composition (basic residues). 2 stretches are compositionally biased toward basic and acidic residues: residues Val-1274–Ser-1283 and Asp-1406–Glu-1417. A compositionally biased stretch (acidic residues) spans Asp-1434–Glu-1461.

This sequence belongs to the type II topoisomerase family. In terms of assembly, homodimer. Requires Mg(2+) as cofactor. Mn(2+) serves as cofactor. Ca(2+) is required as a cofactor.

It is found in the nucleus. It carries out the reaction ATP-dependent breakage, passage and rejoining of double-stranded DNA.. Functionally, control of topological states of DNA by transient breakage and subsequent rejoining of DNA strands. Topoisomerase II makes double-strand breaks. The protein is DNA topoisomerase 2 (TOP2) of Candida albicans (Yeast).